The chain runs to 796 residues: Nuclear cap-binding protein subunit 1 (796 aa).

Residues 1 to 26 (MSRRRHSDGDDGGQSHKRRRTSEPVE) are disordered. The 213-residue stretch at 28-240 (EDRLESLICR…CLYAQIQKLK (213 aa)) folds into the MIF4G domain. Positions 641-719 (LHSTIRKMNK…SEQKNLFLVI (79 aa)) form a coiled coil. The interval 664-695 (DKLERQQHKKQKDSGDEEDMEKNSEDEDGQLE) is disordered. The segment covering 678–695 (GDEEDMEKNSEDEDGQLE) has biased composition (acidic residues).

This sequence belongs to the NCBP1 family. As to quaternary structure, component of the nuclear cap-binding complex (CBC), a heterodimer composed of ncbp1/cbp80 and ncbp2/cbp20 that interacts with m7GpppG-capped RNA. Component of an alternative nuclear cap-binding complex (CBC) composed of ncbp1/cbp80 and ncbp3.

Its subcellular location is the nucleus. It localises to the cytoplasm. Component of the cap-binding complex (CBC), which binds cotranscriptionally to the 5'-cap of pre-mRNAs and is involved in various processes such as pre-mRNA splicing, translation regulation, nonsense-mediated mRNA decay, RNA-mediated gene silencing (RNAi) by microRNAs (miRNAs) and mRNA export. The CBC complex is involved in mRNA export from the nucleus, leading to the recruitment of the mRNA export machinery to the 5'-end of mRNA and to mRNA export in a 5' to 3' direction through the nuclear pore. The CBC complex is also involved in mediating U snRNA and intronless mRNAs export from the nucleus. The CBC complex is essential for a pioneer round of mRNA translation, before steady state translation when the CBC complex is replaced by cytoplasmic cap-binding protein eIF4E. The pioneer round of mRNA translation mediated by the CBC complex plays a central role in nonsense-mediated mRNA decay (NMD), NMD only taking place in mRNAs bound to the CBC complex, but not on eIF4E-bound mRNAs. The CBC complex enhances NMD in mRNAs containing at least one exon-junction complex (EJC), promoting the interaction between UPF1 and UPF2. The CBC complex is also involved in 'failsafe' NMD, which is independent of the EJC complex, while it does not participate in Staufen-mediated mRNA decay (SMD). During cell proliferation, the CBC complex is also involved in microRNAs (miRNAs) biogenesis via its interaction with SRRT/ARS2 and is required for miRNA-mediated RNA interference. The CBC complex also acts as a negative regulator of parn, thereby acting as an inhibitor of mRNA deadenylation. In the CBC complex, ncbp1/cbp80 does not bind directly capped RNAs (m7GpppG-capped RNA) but is required to stabilize the movement of the N-terminal loop of ncbp2/cbp20 and lock the CBC into a high affinity cap-binding state with the cap structure. Associates with NCBP3 to form an alternative cap-binding complex (CBC) which plays a key role in mRNA export. The conventional CBC with NCBP2 binds both small nuclear RNA (snRNA) and messenger (mRNA) and is involved in their export from the nucleus whereas the alternative CBC with NCBP3 does not bind snRNA and associates only with mRNA thereby playing a role only in mRNA export. In Salmo salar (Atlantic salmon), this protein is Nuclear cap-binding protein subunit 1 (ncbp1).